A 33-amino-acid chain; its full sequence is Protamine (33 aa).

The disordered stretch occupies residues 1-33 (MPRRRRSSSRPVRRRRRPRVSRRRRRRGGRRRR).

As to expression, testis.

It is found in the nucleus. The protein localises to the chromosome. In terms of biological role, protamines substitute for histones in the chromatin of sperm during the haploid phase of spermatogenesis. They compact sperm DNA into a highly condensed, stable and inactive complex. This chain is Protamine, found in Oncorhynchus keta (Chum salmon).